Reading from the N-terminus, the 645-residue chain is Crossover junction endonuclease mus-81 (645 aa).

Disordered regions lie at residues 98–119 and 219–310; these read LAAAGAVQDEQPPPPKRARTAR and GVAG…EDRK. The segment covering 223–252 has biased composition (polar residues); sequence SANTSRNAIASGSGTSNPNRSENVNPNRQD. Acidic residues predominate over residues 296-305; that stretch reads DSDDEDPKYD. One can recognise an ERCC4 domain in the interval 353–459; sequence ELVLDTREVQ…NVVYIIENYN (107 aa).

The protein belongs to the XPF family. As to quaternary structure, interacts with eme-1. The cofactor is Mg(2+).

The protein resides in the nucleus. Its function is as follows. Interacts with eme-1 to form a DNA structure-specific endonuclease with substrate preference for branched DNA structures with a 5'-end at the branch nick. Typical substrates include 3'-flap structures, D-loops, replication forks and nicked Holliday junctions. May be required in mitosis for the processing of stalled or collapsed replication fork intermediates. May be required in meiosis for the repair of meiosis-specific double strand breaks subsequent to single-end invasion (SEI). This Neurospora crassa (strain ATCC 24698 / 74-OR23-1A / CBS 708.71 / DSM 1257 / FGSC 987) protein is Crossover junction endonuclease mus-81 (mus-81).